A 600-amino-acid polypeptide reads, in one-letter code: Glutamine--fructose-6-phosphate aminotransferase [isomerizing] (600 aa).

Catalysis depends on Cys2, which acts as the Nucleophile; for GATase activity. The Glutamine amidotransferase type-2 domain occupies 2 to 217 (CGIVGYIGQL…DKEMVIVTDD (216 aa)). 2 consecutive SIS domains span residues 283–422 (IAAA…KNGI) and 452–590 (IARE…VDKP). Residue Lys595 is the For Fru-6P isomerization activity of the active site.

In terms of assembly, homodimer.

Its subcellular location is the cytoplasm. The catalysed reaction is D-fructose 6-phosphate + L-glutamine = D-glucosamine 6-phosphate + L-glutamate. Functionally, catalyzes the first step in hexosamine metabolism, converting fructose-6P into glucosamine-6P using glutamine as a nitrogen source. The protein is Glutamine--fructose-6-phosphate aminotransferase [isomerizing] of Bacillus subtilis (strain 168).